We begin with the raw amino-acid sequence, 702 residues long: MASGPGAATLKKCLEVLRDARNDSEQLAALLLVTKAVRAGDLDSKTRRQIFDAIGFTFPNRLLSSRQAPPGCPEHTFRALGLTLLACFCTEPELAGHSQVLNKIPTFADVLLSPCQPDCTSMVDDAYQCLAAVLATPRGPREMVTKGAASALCQAYVNGGYGSERALALLLGLLAVSEAKCWQRDAPHLLAVLSKLSEEFVRAEDGSQFELCELLPRFIPLSPPLAEVSQGSECVRQLYKGLASILGSKLSQSQRDPALKLAASLTQACGSEWIPAGSTGSKFLALLVNLACVEVRLTLEEPEPLEVEGKKEVVTACYVLIEMGIQECLKEEESLLDEAQRMQLMRIMEEAFGAVVFYLRQVKEEELQDPFVFASVRILGAWMAEETSSLKQEICELLPFLVRYARKLFKEGGPAENLPQTAGLVSSDSSILGQDALRFLLPGFCHLTAEDRPRDILISEGAPALLCDYFLHQWGVLTSQPGSLTSTEMSLQTLCGIFLNLVVTAPNLIRQEKTFSSLMDTLLKSLPFLLPQKDHLVLAANIATLGLVMARILSSSAVLQKTGSAKEFFRATICFLSQAHTAQADPGSHGLALAVSPAYVSAWDDIRELWFLGMQALASCVPLFPWLPQAVLQAQWLEELSELLTRVTAASVDFELIAAFQGVLVGLARASKPCREVILSHHGEEWANLYGMAALEQCLSKQ.

This sequence belongs to the neurochondrin family.

The protein localises to the cytoplasm. It localises to the cytosol. The protein resides in the cell projection. Its subcellular location is the dendrite. It is found in the postsynapse. In terms of biological role, probably involved in signal transduction, in the nervous system. Required for the spatial learning process. May also be involved in neurite outgrowth. The chain is Neurochondrin (NCDN) from Gallus gallus (Chicken).